Here is a 253-residue protein sequence, read N- to C-terminus: Triosephosphate isomerase (253 aa).

15–17 (NWK) is a binding site for substrate. The active-site Electrophile is H101. Residue E171 is the Proton acceptor of the active site. Substrate-binding positions include G177, S216, and 237–238 (GG).

The protein belongs to the triosephosphate isomerase family. As to quaternary structure, homodimer.

It localises to the cytoplasm. The enzyme catalyses D-glyceraldehyde 3-phosphate = dihydroxyacetone phosphate. It functions in the pathway carbohydrate biosynthesis; gluconeogenesis. Its pathway is carbohydrate degradation; glycolysis; D-glyceraldehyde 3-phosphate from glycerone phosphate: step 1/1. Functionally, involved in the gluconeogenesis. Catalyzes stereospecifically the conversion of dihydroxyacetone phosphate (DHAP) to D-glyceraldehyde-3-phosphate (G3P). This chain is Triosephosphate isomerase, found in Caulobacter vibrioides (strain ATCC 19089 / CIP 103742 / CB 15) (Caulobacter crescentus).